The chain runs to 332 residues: L-lactate dehydrogenase A-like 6A (332 aa).

A2 is modified (N-acetylalanine). N6-acetyllysine; alternate occurs at positions 5 and 57. The residue at position 5 (K5) is an N6-succinyllysine; alternate. 29 to 57 (GSVGVACAISILLKGLSDELVLVDVDEGK) lines the NAD(+) pocket. A Glycyl lysine isopeptide (Lys-Gly) (interchain with G-Cter in SUMO2); alternate cross-link involves residue K57. K81 carries the N6-acetyllysine modification. R99 lines the NAD(+) pocket. R106 provides a ligand contact to substrate. K118 bears the N6-acetyllysine; alternate mark. At K118 the chain carries N6-succinyllysine; alternate. N138 lines the NAD(+) pocket. Substrate contacts are provided by N138 and R169. H193 serves as the catalytic Proton acceptor. An N6-acetyllysine modification is found at K232. A Phosphotyrosine modification is found at Y239. An N6-acetyllysine modification is found at K243. T248 is a substrate binding site. Position 309 is a phosphothreonine (T309). K318 bears the N6-acetyllysine; alternate mark. An N6-succinyllysine; alternate modification is found at K318. T322 is modified (phosphothreonine).

This sequence belongs to the LDH/MDH superfamily. LDH family. Testis-specific.

The protein localises to the cytoplasm. It catalyses the reaction (S)-lactate + NAD(+) = pyruvate + NADH + H(+). It functions in the pathway fermentation; pyruvate fermentation to lactate; (S)-lactate from pyruvate: step 1/1. Its function is as follows. Catalyzes the interconversion of L-lactate and pyruvate with nicotinamide adenine dinucleotide NAD(+) as a coenzyme. Significantly increases the transcriptional activity of JUN, when overexpressed. The polypeptide is L-lactate dehydrogenase A-like 6A (LDHAL6A) (Homo sapiens (Human)).